Reading from the N-terminus, the 281-residue chain is Glyoxalase 1 (281 aa).

VOC domains lie at 4–127 and 132–251; these read RALH…IGKA and KVLR…FVGD.

This sequence belongs to the glyoxalase I family.

Functionally, thought to act as a glyoxalase. May remove methylglyoxal from mitochondrial proteins. Has roles in reducing oxidative stress and increasing lifespan. The polypeptide is Glyoxalase 1 (Caenorhabditis briggsae).